The chain runs to 567 residues: Urease subunit alpha (567 aa).

The 439-residue stretch at 129–567 folds into the Urease domain; sequence GGIDTHIHWI…LPMAQRYFLF (439 aa). Ni(2+) is bound by residues His-134, His-136, and Lys-217. Lys-217 carries the N6-carboxylysine modification. His-219 provides a ligand contact to substrate. Ni(2+) contacts are provided by His-246 and His-272. The active-site Proton donor is the His-320. Ni(2+) is bound at residue Asp-360.

This sequence belongs to the metallo-dependent hydrolases superfamily. Urease alpha subunit family. In terms of assembly, heterotrimer of UreA (gamma), UreB (beta) and UreC (alpha) subunits. Three heterotrimers associate to form the active enzyme. The cofactor is Ni cation. Carboxylation allows a single lysine to coordinate two nickel ions.

The protein localises to the cytoplasm. It catalyses the reaction urea + 2 H2O + H(+) = hydrogencarbonate + 2 NH4(+). It participates in nitrogen metabolism; urea degradation; CO(2) and NH(3) from urea (urease route): step 1/1. The sequence is that of Urease subunit alpha from Klebsiella pneumoniae (strain 342).